The sequence spans 921 residues: Protein translocase subunit SecA (921 aa).

ATP contacts are provided by residues Gln87, 105–109 (GEGKT), and Asp515. A disordered region spans residues 872–901 (DMEVAGSTGDRGAALDIQPAPVRSGPKIGR). Residues Cys905, Cys907, Cys916, and Cys917 each coordinate Zn(2+).

The protein belongs to the SecA family. As to quaternary structure, monomer and homodimer. Part of the essential Sec protein translocation apparatus which comprises SecA, SecYEG and auxiliary proteins SecDF-YajC and YidC. Requires Zn(2+) as cofactor.

It localises to the cell inner membrane. The protein resides in the cytoplasm. It catalyses the reaction ATP + H2O + cellular proteinSide 1 = ADP + phosphate + cellular proteinSide 2.. Its function is as follows. Part of the Sec protein translocase complex. Interacts with the SecYEG preprotein conducting channel. Has a central role in coupling the hydrolysis of ATP to the transfer of proteins into and across the cell membrane, serving both as a receptor for the preprotein-SecB complex and as an ATP-driven molecular motor driving the stepwise translocation of polypeptide chains across the membrane. This is Protein translocase subunit SecA from Polynucleobacter asymbioticus (strain DSM 18221 / CIP 109841 / QLW-P1DMWA-1) (Polynucleobacter necessarius subsp. asymbioticus).